A 330-amino-acid polypeptide reads, in one-letter code: Phosphate acyltransferase (330 aa).

The protein belongs to the PlsX family. Homodimer. Probably interacts with PlsY.

Its subcellular location is the cytoplasm. It catalyses the reaction a fatty acyl-[ACP] + phosphate = an acyl phosphate + holo-[ACP]. Its pathway is lipid metabolism; phospholipid metabolism. Catalyzes the reversible formation of acyl-phosphate (acyl-PO(4)) from acyl-[acyl-carrier-protein] (acyl-ACP). This enzyme utilizes acyl-ACP as fatty acyl donor, but not acyl-CoA. The sequence is that of Phosphate acyltransferase from Bacillus cereus (strain ATCC 14579 / DSM 31 / CCUG 7414 / JCM 2152 / NBRC 15305 / NCIMB 9373 / NCTC 2599 / NRRL B-3711).